The primary structure comprises 598 residues: Elongation factor 4 (598 aa).

In terms of domain architecture, tr-type G spans 2–183; sequence KNIRNFCIIA…AIINRVPAPS (182 aa). GTP-binding positions include 14 to 19 and 130 to 133; these read DHGKST and NKVD.

It belongs to the TRAFAC class translation factor GTPase superfamily. Classic translation factor GTPase family. LepA subfamily.

The protein resides in the cell inner membrane. It carries out the reaction GTP + H2O = GDP + phosphate + H(+). Required for accurate and efficient protein synthesis under certain stress conditions. May act as a fidelity factor of the translation reaction, by catalyzing a one-codon backward translocation of tRNAs on improperly translocated ribosomes. Back-translocation proceeds from a post-translocation (POST) complex to a pre-translocation (PRE) complex, thus giving elongation factor G a second chance to translocate the tRNAs correctly. Binds to ribosomes in a GTP-dependent manner. The sequence is that of Elongation factor 4 from Christiangramia forsetii (strain DSM 17595 / CGMCC 1.15422 / KT0803) (Gramella forsetii).